A 147-amino-acid chain; its full sequence is D-aminoacyl-tRNA deacylase (147 aa).

Positions 137-138 (GP) match the Gly-cisPro motif, important for rejection of L-amino acids motif.

It belongs to the DTD family. As to quaternary structure, homodimer.

It is found in the cytoplasm. The catalysed reaction is glycyl-tRNA(Ala) + H2O = tRNA(Ala) + glycine + H(+). It catalyses the reaction a D-aminoacyl-tRNA + H2O = a tRNA + a D-alpha-amino acid + H(+). Its function is as follows. An aminoacyl-tRNA editing enzyme that deacylates mischarged D-aminoacyl-tRNAs. Also deacylates mischarged glycyl-tRNA(Ala), protecting cells against glycine mischarging by AlaRS. Acts via tRNA-based rather than protein-based catalysis; rejects L-amino acids rather than detecting D-amino acids in the active site. By recycling D-aminoacyl-tRNA to D-amino acids and free tRNA molecules, this enzyme counteracts the toxicity associated with the formation of D-aminoacyl-tRNA entities in vivo and helps enforce protein L-homochirality. This Acinetobacter baumannii (strain ATCC 17978 / DSM 105126 / CIP 53.77 / LMG 1025 / NCDC KC755 / 5377) protein is D-aminoacyl-tRNA deacylase.